A 46-amino-acid chain; its full sequence is Lariatin (46 aa).

Positions 1–26 (MTSQPSKKTYNAPSLVQRGKFARTTA) are excised as a propeptide. Residues 27 to 34 (GSQLVYRE) constitute a cross-link (isoglutamyl glycine isopeptide (Gly-Glu)).

The linear precursor LarA is probably cleaved by the putative peptidase LarD, generating linear 18-residue Lariatin-A or 20-residue Lariatin-B. These linear peptides are probably cross-linked by LarB. Finally, lariatins A and B may be exported by ABC transporter LarE.

In terms of biological role, peptide antibiotic with selective activity against Mycobacterium species (M.smegmatis, MIC=3.13 ug/ml and M.tuberculosis, MIC=0.39 ug/ml). it is plausible that the target of lariatins lies within the cell wall in mycobacteria. Functionally, peptide antibiotic with selective activity against Mycobacterium species (M.smegmatis, MIC=6.25 ug/ml). The sequence is that of Lariatin from Rhodococcus jostii.